We begin with the raw amino-acid sequence, 246 residues long: MADS-box transcription factor 14 (246 aa).

Residues 1-61 (MGRGKVQLKR…GKLYEYATDS (61 aa)) enclose the MADS-box domain. The region spanning 88 to 178 (QGNWCHEYRK…QKELVEKQKV (91 aa)) is the K-box domain. The disordered stretch occupies residues 180–199 (KQQVQWDQTQPQTSSSSSSF).

May interact with the K-box of MADS1 and MADS6. As to expression, highly expressed in sterile lemmas, at intermediate levels in stamens, and weakly in lemmas, paleas and carpels.

Its subcellular location is the nucleus. Its function is as follows. Probable transcription factor. May be involved in the control of flowering time. The sequence is that of MADS-box transcription factor 14 (MADS14) from Oryza sativa subsp. japonica (Rice).